The sequence spans 377 residues: Nitric oxide reductase FlRd-NAD(+) reductase (377 aa).

It belongs to the FAD-dependent oxidoreductase family. FAD is required as a cofactor.

It localises to the cytoplasm. The catalysed reaction is 2 reduced [nitric oxide reductase rubredoxin domain] + NAD(+) + H(+) = 2 oxidized [nitric oxide reductase rubredoxin domain] + NADH. It functions in the pathway nitrogen metabolism; nitric oxide reduction. Functionally, one of at least two accessory proteins for anaerobic nitric oxide (NO) reductase. Reduces the rubredoxin moiety of NO reductase. The polypeptide is Nitric oxide reductase FlRd-NAD(+) reductase (Salmonella enteritidis PT4 (strain P125109)).